The sequence spans 164 residues: Cytochrome c-type biogenesis protein CcmE (164 aa).

Over 1–8 (MNPRRKSR) the chain is Cytoplasmic. A helical; Signal-anchor for type II membrane protein membrane pass occupies residues 9 to 29 (LYLAIVVLIGVALTATLMLYA). The Periplasmic segment spans residues 30 to 164 (LRSNIDLFYT…ATPQNEGAKS (135 aa)). Heme contacts are provided by His-130 and Tyr-134. Over residues 131 to 148 (DEKYTPPEVADAMKENHK) the composition is skewed to basic and acidic residues. The disordered stretch occupies residues 131–164 (DEKYTPPEVADAMKENHKGPASAYATPQNEGAKS). Residues 155–164 (ATPQNEGAKS) are compositionally biased toward polar residues.

It belongs to the CcmE/CycJ family.

It localises to the cell inner membrane. In terms of biological role, heme chaperone required for the biogenesis of c-type cytochromes. Transiently binds heme delivered by CcmC and transfers the heme to apo-cytochromes in a process facilitated by CcmF and CcmH. The polypeptide is Cytochrome c-type biogenesis protein CcmE (Serratia proteamaculans (strain 568)).